The primary structure comprises 508 residues: Pentatricopeptide repeat-containing protein At5g48730, chloroplastic (508 aa).

A compositionally biased stretch (polar residues) spans 1–10 (MVSLSTSTSH). A disordered region spans residues 1-22 (MVSLSTSTSHAPPLPTNRRTAE). Residues 1-28 (MVSLSTSTSHAPPLPTNRRTAERTFTVR) constitute a chloroplast transit peptide. PPR repeat units lie at residues 149 to 183 (NVGI…GCVV), 184 to 214 (NHEV…MKSS), 220 to 254 (DVHT…GIRP), 255 to 290 (NTIT…DCKP), 291 to 325 (DSWT…GIEP), 326 to 360 (NIRT…HYSW), 361 to 395 (TIVT…RIFP), 396 to 430 (SCVT…DIRL), 431 to 465 (DLVF…GFKP), and 466 to 500 (DKIT…GEAQ).

Belongs to the PPR family. P subfamily.

It is found in the plastid. Its subcellular location is the chloroplast. The protein is Pentatricopeptide repeat-containing protein At5g48730, chloroplastic of Arabidopsis thaliana (Mouse-ear cress).